The primary structure comprises 312 residues: Ribosomal protein L11 methyltransferase (312 aa).

S-adenosyl-L-methionine is bound by residues threonine 162, glycine 183, aspartate 205, and asparagine 248.

The protein belongs to the methyltransferase superfamily. PrmA family.

Its subcellular location is the cytoplasm. The enzyme catalyses L-lysyl-[protein] + 3 S-adenosyl-L-methionine = N(6),N(6),N(6)-trimethyl-L-lysyl-[protein] + 3 S-adenosyl-L-homocysteine + 3 H(+). Its function is as follows. Methylates ribosomal protein L11. The chain is Ribosomal protein L11 methyltransferase from Anoxybacillus flavithermus (strain DSM 21510 / WK1).